Here is a 632-residue protein sequence, read N- to C-terminus: Golgin subfamily A member 8M (632 aa).

A disordered region spans residues 1-77 (MAEETQHNKL…SSATLKDLES (77 aa)). Positions 38–50 (TNGSIPQTATSGG) are enriched in polar residues. 2 coiled-coil regions span residues 86–154 (LDSR…HMKR) and 209–421 (KLEQ…SLMA). Basic and acidic residues predominate over residues 352 to 362 (KQEERIQEQHK). 3 disordered regions span residues 352–384 (KQEE…NKST), 422–456 (LPGE…REAM), and 505–524 (DAAL…DEGE). Gly residues predominate over residues 508–520 (LGGGHHQAGAQGG).

Belongs to the GOLGA8 family.

In Homo sapiens (Human), this protein is Golgin subfamily A member 8M.